The sequence spans 228 residues: NAD(P)H-hydrate epimerase (228 aa).

A YjeF N-terminal domain is found at Val-9–Ala-209. Asn-53–Asp-57 contacts (6S)-NADPHX. K(+) is bound by residues Asn-54 and Asp-115. Residues Gly-119–Pro-125 and Asp-148 each bind (6S)-NADPHX. Ser-151 provides a ligand contact to K(+).

It belongs to the NnrE/AIBP family. K(+) serves as cofactor.

It catalyses the reaction (6R)-NADHX = (6S)-NADHX. The catalysed reaction is (6R)-NADPHX = (6S)-NADPHX. Its function is as follows. Catalyzes the epimerization of the S- and R-forms of NAD(P)HX, a damaged form of NAD(P)H that is a result of enzymatic or heat-dependent hydration. This is a prerequisite for the S-specific NAD(P)H-hydrate dehydratase to allow the repair of both epimers of NAD(P)HX. This Bordetella parapertussis (strain 12822 / ATCC BAA-587 / NCTC 13253) protein is NAD(P)H-hydrate epimerase.